The sequence spans 244 residues: Large ribosomal subunit protein uL3 (244 aa).

Positions Lys-215 to Lys-244 are disordered. Positions Ala-235 to Lys-244 are enriched in basic residues.

It belongs to the universal ribosomal protein uL3 family. As to quaternary structure, part of the 50S ribosomal subunit. Forms a cluster with proteins L14 and L19.

Functionally, one of the primary rRNA binding proteins, it binds directly near the 3'-end of the 23S rRNA, where it nucleates assembly of the 50S subunit. The chain is Large ribosomal subunit protein uL3 from Koribacter versatilis (strain Ellin345).